The sequence spans 176 residues: Large ribosomal subunit protein uL10 (176 aa).

This sequence belongs to the universal ribosomal protein uL10 family. As to quaternary structure, part of the ribosomal stalk of the 50S ribosomal subunit. The N-terminus interacts with L11 and the large rRNA to form the base of the stalk. The C-terminus forms an elongated spine to which L12 dimers bind in a sequential fashion forming a multimeric L10(L12)X complex.

In terms of biological role, forms part of the ribosomal stalk, playing a central role in the interaction of the ribosome with GTP-bound translation factors. The polypeptide is Large ribosomal subunit protein uL10 (Mycobacteroides abscessus (strain ATCC 19977 / DSM 44196 / CCUG 20993 / CIP 104536 / JCM 13569 / NCTC 13031 / TMC 1543 / L948) (Mycobacterium abscessus)).